A 299-amino-acid chain; its full sequence is CRISPR-associated endonuclease Cas1 3 (299 aa).

Mn(2+)-binding residues include Glu-143, His-210, and Asp-223.

The protein belongs to the CRISPR-associated endonuclease Cas1 family. In terms of assembly, homodimer, forms a heterotetramer with a Cas2 homodimer. Mg(2+) is required as a cofactor. Mn(2+) serves as cofactor.

Its function is as follows. CRISPR (clustered regularly interspaced short palindromic repeat), is an adaptive immune system that provides protection against mobile genetic elements (viruses, transposable elements and conjugative plasmids). CRISPR clusters contain spacers, sequences complementary to antecedent mobile elements, and target invading nucleic acids. CRISPR clusters are transcribed and processed into CRISPR RNA (crRNA). Acts as a dsDNA endonuclease. Involved in the integration of spacer DNA into the CRISPR cassette. This is CRISPR-associated endonuclease Cas1 3 from Methanospirillum hungatei JF-1 (strain ATCC 27890 / DSM 864 / NBRC 100397 / JF-1).